Consider the following 557-residue polypeptide: Hepatocyte nuclear factor 1-beta (557 aa).

The interval Met1 to Glu31 is dimerization. One can recognise an HNF-p1 domain in the interval Met1–Glu32. Ser49, Ser52, Ser75, and Ser80 each carry phosphoserine. The disordered stretch occupies residues Thr64–Asp85. One can recognise a POU-specific atypical domain in the interval Lys93–Gln188. The segment at residues Met231–Gln311 is a DNA-binding region (homeobox; HNF1-type). The disordered stretch occupies residues His324 to Tyr352. The span at Pro328–Pro344 shows a compositional bias: low complexity.

This sequence belongs to the HNF1 homeobox family. In terms of assembly, binds DNA as a dimer. Can form homodimer or heterodimer with HNF1-alpha. Interacts (via HNF-p1 domain) with PCBD1; the interaction increases its transactivation activity.

The protein localises to the nucleus. Functionally, transcription factor that binds to the inverted palindrome 5'-GTTAATNATTAAC-3'. Binds to the FPC element in the cAMP regulatory unit of the PLAU gene. Transcriptional activity is increased by coactivator PCBD1. This chain is Hepatocyte nuclear factor 1-beta (HNF1B), found in Homo sapiens (Human).